A 137-amino-acid chain; its full sequence is Large ribosomal subunit protein uL16 (137 aa).

This sequence belongs to the universal ribosomal protein uL16 family. Part of the 50S ribosomal subunit.

In terms of biological role, binds 23S rRNA and is also seen to make contacts with the A and possibly P site tRNAs. The sequence is that of Large ribosomal subunit protein uL16 from Sorangium cellulosum (strain So ce56) (Polyangium cellulosum (strain So ce56)).